The chain runs to 134 residues: MANVYSRKKRIAHEIQKKINISLQHNIRDPRLRKTTISWVSVSHDLGSATVFVIFNGIQNDNQTSEEIKKRIKTLQAASGFIRYLLGKTMHLRIVPKLTFVYDQSLSHGIYIHELVNKIIREDHKSLIKNGIVN.

It belongs to the RbfA family. As to quaternary structure, monomer. Binds 30S ribosomal subunits, but not 50S ribosomal subunits or 70S ribosomes.

The protein localises to the cytoplasm. Functionally, one of several proteins that assist in the late maturation steps of the functional core of the 30S ribosomal subunit. Associates with free 30S ribosomal subunits (but not with 30S subunits that are part of 70S ribosomes or polysomes). Required for efficient processing of 16S rRNA. May interact with the 5'-terminal helix region of 16S rRNA. In Baumannia cicadellinicola subsp. Homalodisca coagulata, this protein is Ribosome-binding factor A.